Consider the following 301-residue polypeptide: Hydroxyquinol 1,2-dioxygenase (301 aa).

4 residues coordinate Fe cation: Y169, Y202, H226, and H228.

The protein belongs to the intradiol ring-cleavage dioxygenase family. Fe(3+) is required as a cofactor.

The enzyme catalyses benzene-1,2,4-triol + O2 = maleylacetate + 2 H(+). It functions in the pathway aromatic compound metabolism. In terms of biological role, involved in resorcinol degradation. Catalyzes the conversion of hydroxyquinol to malelylacetate. Also shows weak activity with catechol, 3-methylcatechol and 4-methylcatechol, but cannot use 4-chlorocatechol, 4-nitrocatechol or protocatechuate. This Corynebacterium glutamicum (strain ATCC 13032 / DSM 20300 / JCM 1318 / BCRC 11384 / CCUG 27702 / LMG 3730 / NBRC 12168 / NCIMB 10025 / NRRL B-2784 / 534) protein is Hydroxyquinol 1,2-dioxygenase.